We begin with the raw amino-acid sequence, 1038 residues long: SEH-associated protein 4 (1038 aa).

The WD 1 repeat unit spans residues 50–90 (KDFGSITCLDYSESEIGMIGVGEKNGYLRIFNISGQNSSSP). Phosphoserine occurs at positions 123 and 136. 3 WD repeats span residues 147 to 189 (KKQR…DSHE), 235 to 276 (QHPT…DQAS), and 544 to 587 (NTWR…SNQD).

Belongs to the WD repeat mio family. In terms of assembly, component of the SEA complex composed of at least IML1/SEA1, RTC1/SEA2, MTC5/SEA3, NPR2, NPR3, SEA4, SEC13 and SEH1.

It is found in the cytoplasm. It localises to the vacuole membrane. Its function is as follows. Component of the SEA complex which coats the vacuolar membrane and is involved in intracellular trafficking, autophagy, response to nitrogen starvation, and amino acid biogenesis. The protein is SEH-associated protein 4 (SEA4) of Saccharomyces cerevisiae (strain ATCC 204508 / S288c) (Baker's yeast).